A 103-amino-acid chain; its full sequence is Large ribosomal subunit protein bL21 (103 aa).

This sequence belongs to the bacterial ribosomal protein bL21 family. As to quaternary structure, part of the 50S ribosomal subunit. Contacts protein L20.

Its function is as follows. This protein binds to 23S rRNA in the presence of protein L20. This chain is Large ribosomal subunit protein bL21, found in Klebsiella pneumoniae (strain 342).